A 203-amino-acid polypeptide reads, in one-letter code: ATP-dependent Clp protease proteolytic subunit (203 aa).

Ser-107 functions as the Nucleophile in the catalytic mechanism. The active site involves His-132.

Belongs to the peptidase S14 family. Fourteen ClpP subunits assemble into 2 heptameric rings which stack back to back to give a disk-like structure with a central cavity, resembling the structure of eukaryotic proteasomes.

Its subcellular location is the cytoplasm. The enzyme catalyses Hydrolysis of proteins to small peptides in the presence of ATP and magnesium. alpha-casein is the usual test substrate. In the absence of ATP, only oligopeptides shorter than five residues are hydrolyzed (such as succinyl-Leu-Tyr-|-NHMec, and Leu-Tyr-Leu-|-Tyr-Trp, in which cleavage of the -Tyr-|-Leu- and -Tyr-|-Trp bonds also occurs).. Cleaves peptides in various proteins in a process that requires ATP hydrolysis. Has a chymotrypsin-like activity. Plays a major role in the degradation of misfolded proteins. The chain is ATP-dependent Clp protease proteolytic subunit from Shewanella loihica (strain ATCC BAA-1088 / PV-4).